Reading from the N-terminus, the 241-residue chain is Spiralin (241 aa).

An N-terminal signal peptide occupies residues 1–23; sequence MKKLLSILAVFGVSAVGTTSVVA. C24 carries the N-palmitoyl cysteine lipid modification. C24 is lipidated: S-diacylglycerol cysteine.

This sequence belongs to the spiralin family. As to quaternary structure, seems to occur as dimer, tetramers, and large oligomers of identical chains. Palmitate and stearate are the major lipid components.

The protein localises to the cell membrane. Its function is as follows. Major membrane protein of spiroplasma. The protein is Spiralin (spi) of Spiroplasma citri.